Reading from the N-terminus, the 262-residue chain is Hydroxyethylthiazole kinase (262 aa).

Position 39 (Met-39) interacts with substrate. ATP contacts are provided by Lys-115 and Thr-160. Gly-187 is a substrate binding site.

This sequence belongs to the Thz kinase family. It depends on Mg(2+) as a cofactor.

It carries out the reaction 5-(2-hydroxyethyl)-4-methylthiazole + ATP = 4-methyl-5-(2-phosphooxyethyl)-thiazole + ADP + H(+). Its pathway is cofactor biosynthesis; thiamine diphosphate biosynthesis; 4-methyl-5-(2-phosphoethyl)-thiazole from 5-(2-hydroxyethyl)-4-methylthiazole: step 1/1. Its function is as follows. Catalyzes the phosphorylation of the hydroxyl group of 4-methyl-5-beta-hydroxyethylthiazole (THZ). The protein is Hydroxyethylthiazole kinase of Staphylococcus epidermidis (strain ATCC 35984 / DSM 28319 / BCRC 17069 / CCUG 31568 / BM 3577 / RP62A).